Consider the following 244-residue polypeptide: L-xylulose reductase (244 aa).

Met-1 carries the post-translational modification N-acetylmethionine. 11 to 39 (LVTGAGKGIGRSTVLALKAAGAQVVAVSR) serves as a coordination point for NADP(+). Arg-21 carries the post-translational modification Omega-N-methylarginine. Residue Ser-136 coordinates substrate. Catalysis depends on Tyr-149, which acts as the Proton acceptor. Residue Lys-153 is part of the active site.

This sequence belongs to the short-chain dehydrogenases/reductases (SDR) family. Homotetramer. As to expression, highly expressed in kidney, liver and epididymis. Expressed at intermediate level in lung. Weakly or not expressed in brain, heart, spleen and testis.

The protein localises to the membrane. Its subcellular location is the apical cell membrane. It carries out the reaction xylitol + NADP(+) = L-xylulose + NADPH + H(+). In terms of biological role, catalyzes the NADPH-dependent reduction of several pentoses, tetroses, trioses, alpha-dicarbonyl compounds and L-xylulose. Participates in the uronate cycle of glucose metabolism. May play a role in the water absorption and cellular osmoregulation in the proximal renal tubules by producing xylitol, an osmolyte, thereby preventing osmolytic stress from occurring in the renal tubules. The chain is L-xylulose reductase (Dcxr) from Mus musculus (Mouse).